The primary structure comprises 1244 residues: DNA polymerase beta (1244 aa).

Tandem repeats lie at residues 1069–1072 (AGNP), 1073–1076 (AGNP), 1077–1080 (AGNP), 1081–1084 (AGNP), 1085–1088 (AGNP), 1089–1092 (AGNP), 1093–1096 (AGNP), 1097–1100 (AGNP), 1101–1104 (AGNP), 1105–1108 (AGNP), 1109–1112 (AGNP), 1113–1116 (AGNP), and 1117–1120 (AGNP). Residues 1069–1118 (AGNPAGNPAGNPAGNPAGNPAGNPAGNPAGNPAGNPAGNPAGNPAGNPAG) are disordered. A 13 X 4 AA tandem repeats of A-G-N-P region spans residues 1069 to 1120 (AGNPAGNPAGNPAGNPAGNPAGNPAGNPAGNPAGNPAGNPAGNPAGNPAGNP).

This sequence belongs to the DNA polymerase type-B family.

The enzyme catalyses DNA(n) + a 2'-deoxyribonucleoside 5'-triphosphate = DNA(n+1) + diphosphate. Functionally, DNA-directed DNA polymerase involved in viral DNA replication. This African swine fever virus (isolate Pig/Portugal/Lis 60/1960) (ASFV) protein is DNA polymerase beta (DPOL).